The primary structure comprises 753 residues: Photosystem I P700 chlorophyll a apoprotein A1 (753 aa).

The next 8 membrane-spanning stretches (helical) occupy residues 73-96 (IFSA…YHGA), 159-182 (LYCT…FHYH), 198-222 (LNHH…HVSL), 294-312 (TAHH…GHMY), 349-372 (WHAQ…HHMY), 388-414 (LSLF…IFMV), 436-458 (AIVS…LYIH), and 534-552 (FLVH…LILL). [4Fe-4S] cluster is bound by residues C576 and C585. Transmembrane regions (helical) follow at residues 592–613 (HVFL…HFSW) and 667–689 (LSAY…MFLF). H678 is a chlorophyll a' binding site. Residues M686 and Y694 each contribute to the chlorophyll a site. W695 provides a ligand contact to phylloquinone. A helical transmembrane segment spans residues 727 to 747 (AVGVAHYLLGGIVTTWAFFLA).

Belongs to the PsaA/PsaB family. The PsaA/B heterodimer binds the P700 chlorophyll special pair and subsequent electron acceptors. PSI consists of a core antenna complex that captures photons, and an electron transfer chain that converts photonic excitation into a charge separation. The eukaryotic PSI reaction center is composed of at least 11 subunits. P700 is a chlorophyll a/chlorophyll a' dimer, A0 is one or more chlorophyll a, A1 is one or both phylloquinones and FX is a shared 4Fe-4S iron-sulfur center. is required as a cofactor.

It localises to the plastid. It is found in the chloroplast thylakoid membrane. The catalysed reaction is reduced [plastocyanin] + hnu + oxidized [2Fe-2S]-[ferredoxin] = oxidized [plastocyanin] + reduced [2Fe-2S]-[ferredoxin]. Functionally, psaA and PsaB bind P700, the primary electron donor of photosystem I (PSI), as well as the electron acceptors A0, A1 and FX. PSI is a plastocyanin-ferredoxin oxidoreductase, converting photonic excitation into a charge separation, which transfers an electron from the donor P700 chlorophyll pair to the spectroscopically characterized acceptors A0, A1, FX, FA and FB in turn. Oxidized P700 is reduced on the lumenal side of the thylakoid membrane by plastocyanin. In Pinus thunbergii (Japanese black pine), this protein is Photosystem I P700 chlorophyll a apoprotein A1.